The sequence spans 396 residues: NADH-quinone oxidoreductase subunit D (396 aa).

Belongs to the complex I 49 kDa subunit family. In terms of assembly, NDH-1 is composed of 14 different subunits. Subunits NuoB, C, D, E, F, and G constitute the peripheral sector of the complex.

The protein localises to the cell inner membrane. The enzyme catalyses a quinone + NADH + 5 H(+)(in) = a quinol + NAD(+) + 4 H(+)(out). NDH-1 shuttles electrons from NADH, via FMN and iron-sulfur (Fe-S) centers, to quinones in the respiratory chain. The immediate electron acceptor for the enzyme in this species is believed to be ubiquinone. Couples the redox reaction to proton translocation (for every two electrons transferred, four hydrogen ions are translocated across the cytoplasmic membrane), and thus conserves the redox energy in a proton gradient. The chain is NADH-quinone oxidoreductase subunit D from Methylorubrum extorquens (strain PA1) (Methylobacterium extorquens).